Here is a 156-residue protein sequence, read N- to C-terminus: Ribonuclease pancreatic (156 aa).

Positions 1–28 are cleaved as a signal peptide; that stretch reads MALEKSLVLLPLLVLALLVLGWIQPSLG. Substrate contacts are provided by Lys-35 and Arg-38. His-40 acts as the Proton acceptor in catalysis. 4 disulfide bridges follow: Cys-54–Cys-112, Cys-68–Cys-123, Cys-86–Cys-138, and Cys-93–Cys-100. Asn-62 carries N-linked (GlcNAc...) asparagine glycosylation. A substrate-binding site is contributed by 69-73; the sequence is KPVNT. The N-linked (GlcNAc...) asparagine glycan is linked to Asn-90. Residue Lys-94 coordinates substrate. N-linked (GlcNAc...) asparagine glycosylation occurs at Asn-104. Position 113 (Arg-113) interacts with substrate. His-147 functions as the Proton donor in the catalytic mechanism.

The protein belongs to the pancreatic ribonuclease family. Monomer. Interacts with and forms tight 1:1 complexes with RNH1. Dimerization of two such complexes may occur. Interaction with RNH1 inhibits this protein.

The protein resides in the secreted. It catalyses the reaction an [RNA] containing cytidine + H2O = an [RNA]-3'-cytidine-3'-phosphate + a 5'-hydroxy-ribonucleotide-3'-[RNA].. The enzyme catalyses an [RNA] containing uridine + H2O = an [RNA]-3'-uridine-3'-phosphate + a 5'-hydroxy-ribonucleotide-3'-[RNA].. Its function is as follows. Endonuclease that catalyzes the cleavage of RNA on the 3' side of pyrimidine nucleotides. Acts on single-stranded and double-stranded RNA. This Lemur catta (Ring-tailed lemur) protein is Ribonuclease pancreatic (RNASE1).